The sequence spans 21 residues: Short neurotoxin E1 (21 aa).

The interval 1–21 (MICYNHQSSEPPTTXTCSEGQ) is disordered.

Contains 4 disulfide bonds. As to expression, expressed by the venom gland.

It localises to the secreted. Functionally, binds to muscle nicotinic acetylcholine receptor (nAChR) and inhibit acetylcholine from binding to the receptor, thereby impairing neuromuscular transmission. The polypeptide is Short neurotoxin E1 (Micrurus pyrrhocryptus (Coral snake)).